The following is a 314-amino-acid chain: MEESVGSRGGGGGGLDAQIEQLMECRPLSEPEVKTLCEKAKEILMEESNVQPVKSPVTICGDIHGQFHDLVELFRIGGKCPDTNYLFMGDYVDRGYYSVETVTLLVALKVRYPQRITILRGNHESRQITQVYGFYDECLRKYGSANVWKIFTDLFDYFPLTALVESEIFCLHGGLSPSIDNLDSVRSLDRVQEVPHEGPMCDLLWSDPDDRCGWGISPRGAGYTFGQDISEQFNHTNNLKLVARAHQLVMEGYNWAHEQKVVTIFSAPNYCYRCGNMASILEVDDCRNHTFIQFEPAPRRGEPDVTRRTPDYFL.

The Mn(2+) site is built by D62, H64, D90, and N122. H123 acts as the Proton donor in catalysis. Residues H172 and H246 each contribute to the Mn(2+) site.

The protein belongs to the PPP phosphatase family. PP-2A subfamily. It depends on Mn(2+) as a cofactor.

Its subcellular location is the cytoplasm. It catalyses the reaction O-phospho-L-seryl-[protein] + H2O = L-seryl-[protein] + phosphate. The enzyme catalyses O-phospho-L-threonyl-[protein] + H2O = L-threonyl-[protein] + phosphate. In Oryza sativa subsp. japonica (Rice), this protein is Serine/threonine-protein phosphatase PP2A-4 catalytic subunit (PP2A4).